Reading from the N-terminus, the 56-residue chain is Small ribosomal subunit protein uS14 (56 aa).

Positions 21, 24, 39, and 42 each coordinate Zn(2+).

The protein belongs to the universal ribosomal protein uS14 family. Zinc-binding uS14 subfamily. As to quaternary structure, part of the 30S ribosomal subunit. Requires Zn(2+) as cofactor.

Binds 16S rRNA, required for the assembly of 30S particles. This chain is Small ribosomal subunit protein uS14, found in Pyrococcus abyssi (strain GE5 / Orsay).